Reading from the N-terminus, the 232-residue chain is uncharacterized protein (232 aa).

A helical transmembrane segment spans residues 209-229 (ATISTPALGYAYFLFTLTLVF).

The protein resides in the host membrane. This is an uncharacterized protein from Saccharolobus islandicus (Sulfolobus islandicus).